A 462-amino-acid polypeptide reads, in one-letter code: Putative F-box protein At1g12855 (462 aa).

Basic and acidic residues predominate over residues 1–22 (MESREDSFISKEKKSTMKKEKQ). The interval 1–59 (MESREDSFISKEKKSTMKKEKQAIASQRNRRRVIKNRGNGKRLIASLSQRKRRRIPRGR) is disordered. Residues 28–40 (RNRRRVIKNRGNG) are compositionally biased toward basic residues. The 46-residue stretch at 65-110 (VFAPSSLPNDVVEEIFLRLPVKAIIQLKSLSKQWRSTIESRSFEER) folds into the F-box domain.

This Arabidopsis thaliana (Mouse-ear cress) protein is Putative F-box protein At1g12855.